A 135-amino-acid polypeptide reads, in one-letter code: L-ectoine synthase (135 aa).

Belongs to the ectoine synthase family.

The enzyme catalyses (2S)-4-acetamido-2-aminobutanoate = L-ectoine + H2O. Its pathway is amine and polyamine biosynthesis; ectoine biosynthesis; L-ectoine from L-aspartate 4-semialdehyde: step 3/3. In terms of biological role, catalyzes the circularization of gamma-N-acetyl-alpha,gamma-diaminobutyric acid (ADABA) to ectoine (1,4,5,6-tetrahydro-2-methyl-4-pyrimidine carboxylic acid), which is an excellent osmoprotectant. This is L-ectoine synthase from Hyphomonas neptunium (strain ATCC 15444).